Here is a 439-residue protein sequence, read N- to C-terminus: Serine--tRNA ligase (439 aa).

237-239 (TAE) contacts L-serine. 268 to 270 (RAE) contributes to the ATP binding site. Residue Glu-291 coordinates L-serine. Residue 362–365 (EISS) participates in ATP binding. Position 397 (Ser-397) interacts with L-serine.

It belongs to the class-II aminoacyl-tRNA synthetase family. Type-1 seryl-tRNA synthetase subfamily. As to quaternary structure, homodimer. The tRNA molecule binds across the dimer.

The protein localises to the cytoplasm. The catalysed reaction is tRNA(Ser) + L-serine + ATP = L-seryl-tRNA(Ser) + AMP + diphosphate + H(+). The enzyme catalyses tRNA(Sec) + L-serine + ATP = L-seryl-tRNA(Sec) + AMP + diphosphate + H(+). Its pathway is aminoacyl-tRNA biosynthesis; selenocysteinyl-tRNA(Sec) biosynthesis; L-seryl-tRNA(Sec) from L-serine and tRNA(Sec): step 1/1. Functionally, catalyzes the attachment of serine to tRNA(Ser). Is also able to aminoacylate tRNA(Sec) with serine, to form the misacylated tRNA L-seryl-tRNA(Sec), which will be further converted into selenocysteinyl-tRNA(Sec). The chain is Serine--tRNA ligase from Afipia carboxidovorans (strain ATCC 49405 / DSM 1227 / KCTC 32145 / OM5) (Oligotropha carboxidovorans).